A 108-amino-acid chain; its full sequence is Phosphoribosyl-ATP pyrophosphatase (108 aa).

It belongs to the PRA-PH family.

Its subcellular location is the cytoplasm. The enzyme catalyses 1-(5-phospho-beta-D-ribosyl)-ATP + H2O = 1-(5-phospho-beta-D-ribosyl)-5'-AMP + diphosphate + H(+). It participates in amino-acid biosynthesis; L-histidine biosynthesis; L-histidine from 5-phospho-alpha-D-ribose 1-diphosphate: step 2/9. This Trichlorobacter lovleyi (strain ATCC BAA-1151 / DSM 17278 / SZ) (Geobacter lovleyi) protein is Phosphoribosyl-ATP pyrophosphatase.